Consider the following 161-residue polypeptide: 2-C-methyl-D-erythritol 2,4-cyclodiphosphate synthase (161 aa).

Residues aspartate 11 and histidine 13 each contribute to the a divalent metal cation site. 4-CDP-2-C-methyl-D-erythritol 2-phosphate contacts are provided by residues 11–13 (DIH) and 37–38 (HS). Histidine 45 serves as a coordination point for a divalent metal cation. Residues 59–61 (DIG), 135–138 (TTNE), and arginine 145 each bind 4-CDP-2-C-methyl-D-erythritol 2-phosphate.

Belongs to the IspF family. In terms of assembly, homotrimer. Requires a divalent metal cation as cofactor.

The catalysed reaction is 4-CDP-2-C-methyl-D-erythritol 2-phosphate = 2-C-methyl-D-erythritol 2,4-cyclic diphosphate + CMP. It participates in isoprenoid biosynthesis; isopentenyl diphosphate biosynthesis via DXP pathway; isopentenyl diphosphate from 1-deoxy-D-xylulose 5-phosphate: step 4/6. Functionally, involved in the biosynthesis of isopentenyl diphosphate (IPP) and dimethylallyl diphosphate (DMAPP), two major building blocks of isoprenoid compounds. Catalyzes the conversion of 4-diphosphocytidyl-2-C-methyl-D-erythritol 2-phosphate (CDP-ME2P) to 2-C-methyl-D-erythritol 2,4-cyclodiphosphate (ME-CPP) with a corresponding release of cytidine 5-monophosphate (CMP). The polypeptide is 2-C-methyl-D-erythritol 2,4-cyclodiphosphate synthase (Thermosynechococcus vestitus (strain NIES-2133 / IAM M-273 / BP-1)).